Consider the following 136-residue polypeptide: Large ribosomal subunit protein bL17 (136 aa).

This sequence belongs to the bacterial ribosomal protein bL17 family. As to quaternary structure, part of the 50S ribosomal subunit. Contacts protein L32.

The protein is Large ribosomal subunit protein bL17 of Methylobacterium radiotolerans (strain ATCC 27329 / DSM 1819 / JCM 2831 / NBRC 15690 / NCIMB 10815 / 0-1).